The sequence spans 605 residues: Arginyl-tRNA--protein transferase 2 (605 aa).

The segment covering 496 to 513 (KVSSSSSSPQASETLLES) has biased composition (low complexity). The tract at residues 496–549 (KVSSSSSSPQASETLLESTSEHEDMEQGDTNDDDDEMYNSDEDSDSDSSSSRNR) is disordered. A compositionally biased stretch (acidic residues) spans 518-541 (EDMEQGDTNDDDDEMYNSDEDSDS).

This sequence belongs to the R-transferase family.

It catalyses the reaction an N-terminal L-alpha-aminoacyl-[protein] + L-arginyl-tRNA(Arg) = an N-terminal L-arginyl-L-aminoacyl-[protein] + tRNA(Arg) + H(+). Its function is as follows. Involved in the post-translational conjugation of arginine to the N-terminal aspartate or glutamate of a protein. This arginylation is required for degradation of the protein via the ubiquitin pathway. Component of the N-end rule pathway with ATE1 and PRT6. The N-end rule pathway regulates seed after-ripening, seedling sugar sensitivity, seedling lipid breakdown, and abscisic acid (ABA) sensitivity of germination. The end-rule pathway regulates various aspects of leaf and shoot development. Involved in the oxygen-dependent N-arginylation of RAP2-12, an activator of hypoxic gene expression. This N-terminal modification leads to ubiquitination by PRT6 and subsequent degradation of RAP2-12 under aerobic conditions. Involved in disease resistance. The end-rule pathway plays a role in regulating the timing and amplitude of the immune response following infection with the bacterial pathogen Pseudomonas syringae pv tomato. Regulates the biosynthesis of plant-defense metabolites such as glucosinolates, and the biosynthesis and response to the phytohormone jasmonate (JA), which plays a key role in plant immunity. This is Arginyl-tRNA--protein transferase 2 from Arabidopsis thaliana (Mouse-ear cress).